We begin with the raw amino-acid sequence, 78 residues long: Toxin-like protein 10 (78 aa).

A signal peptide spans 1–23; it reads MKATALLIAVFILFSVFGDMGYC.

Post-translationally, contains 4 disulfide bonds. In terms of tissue distribution, expressed by the venom gland.

The protein localises to the secreted. This chain is Toxin-like protein 10, found in Urodacus yaschenkoi (Inland robust scorpion).